We begin with the raw amino-acid sequence, 204 residues long: phospholipase A2 inhibitor and Ly6/PLAUR domain-containing protein (204 aa).

An N-terminal signal peptide occupies residues 1 to 26 (MRLSRRPETFLLAFVLLCTLLGLGCP). One can recognise a UPAR/Ly6 domain in the interval 27–117 (LHCEICTAAG…NSAFLSVPLT (91 aa)). Disulfide bonds link C29-C53, C32-C39, C46-C74, C80-C101, C102-C107, C126-C151, and C144-C172.

This sequence belongs to the CNF-like-inhibitor family.

It localises to the secreted. This Homo sapiens (Human) protein is phospholipase A2 inhibitor and Ly6/PLAUR domain-containing protein (PINLYP).